We begin with the raw amino-acid sequence, 539 residues long: Phenylalanine--tRNA ligase beta subunit (539 aa).

The B5 domain occupies 271–347 (LSPARWTVTT…KSYGYENLKA (77 aa)). 4 residues coordinate Mg(2+): aspartate 325, aspartate 331, glutamate 334, and aspartate 335.

This sequence belongs to the phenylalanyl-tRNA synthetase beta subunit family. Type 2 subfamily. As to quaternary structure, tetramer of two alpha and two beta subunits. It depends on Mg(2+) as a cofactor.

The protein resides in the cytoplasm. The catalysed reaction is tRNA(Phe) + L-phenylalanine + ATP = L-phenylalanyl-tRNA(Phe) + AMP + diphosphate + H(+). The protein is Phenylalanine--tRNA ligase beta subunit of Methanothrix thermoacetophila (strain DSM 6194 / JCM 14653 / NBRC 101360 / PT) (Methanosaeta thermophila).